The following is a 253-amino-acid chain: Ferritin-2, chloroplastic (253 aa).

Residues 1–45 constitute a chloroplast transit peptide; the sequence is MLHKASPALSLLSSGYTGGGNLFPPSRNSSNLLFSPSGSRFSVQA. The extension peptide (EP) stretch occupies residues 46 to 82; that stretch reads AKGTNTKSLTGVVFEPFEEVKKEMELVPTTPFVSLAR. Positions 83-236 constitute a Ferritin-like diiron domain; that stretch reads HKFSDDSESA…EYVAQLRRIG (154 aa). Fe cation-binding residues include Glu100, Glu135, His138, Glu184, and Gln218.

The protein belongs to the ferritin family. As to quaternary structure, oligomer of 24 subunits. There are two types of subunits: L (light) chain and H (heavy) chain. The major chain can be light or heavy, depending on the species and tissue type. The functional molecule forms a roughly spherical shell with a diameter of 12 nm and contains a central cavity into which the insoluble mineral iron core is deposited.

It is found in the plastid. It localises to the chloroplast. The catalysed reaction is 4 Fe(2+) + O2 + 4 H(+) = 4 Fe(3+) + 2 H2O. Functionally, stores iron in a soluble, non-toxic, readily available form. Important for iron homeostasis. Has ferroxidase activity. Iron is taken up in the ferrous form and deposited as ferric hydroxides after oxidation. This chain is Ferritin-2, chloroplastic (FER2), found in Arabidopsis thaliana (Mouse-ear cress).